The chain runs to 224 residues: Synaptonemal complex protein 3 (224 aa).

Coiled coils occupy residues arginine 63–arginine 97 and histidine 137–threonine 171.

Interacts with gras-1. Interacts with brc-1 and brd-1.

It is found in the chromosome. Plays a role in early meiotic events; during prophase I contributes to synaptonemal complex (SC) assembly, synapsis and chiasmata formation and stabilization of homologous chromosomes pairing. Required for restricting SC assembly to bridge paired chromosome axes. Required for the timely progression of meiotic crossover recombination. Required for the synapsis checkpoint. This is Synaptonemal complex protein 3 from Caenorhabditis elegans.